The primary structure comprises 490 residues: N-succinylglutamate 5-semialdehyde dehydrogenase (490 aa).

223–228 (GSAGTG) contacts NAD(+). Catalysis depends on residues E246 and C280.

This sequence belongs to the aldehyde dehydrogenase family. AstD subfamily.

The catalysed reaction is N-succinyl-L-glutamate 5-semialdehyde + NAD(+) + H2O = N-succinyl-L-glutamate + NADH + 2 H(+). The protein operates within amino-acid degradation; L-arginine degradation via AST pathway; L-glutamate and succinate from L-arginine: step 4/5. In terms of biological role, catalyzes the NAD-dependent reduction of succinylglutamate semialdehyde into succinylglutamate. This chain is N-succinylglutamate 5-semialdehyde dehydrogenase, found in Serratia proteamaculans (strain 568).